Reading from the N-terminus, the 122-residue chain is Basic phospholipase A2 (122 aa).

Intrachain disulfides connect Cys-26/Cys-115, Cys-28/Cys-44, Cys-43/Cys-95, Cys-49/Cys-122, Cys-50/Cys-88, Cys-57/Cys-81, and Cys-75/Cys-86. Ca(2+) is bound by residues Tyr-27, Gly-29, and Gly-31. His-47 is a catalytic residue. A Ca(2+)-binding site is contributed by Asp-48. Asp-89 is a catalytic residue.

It belongs to the phospholipase A2 family. Group II subfamily. D49 sub-subfamily. In terms of assembly, homodimer. Requires Ca(2+) as cofactor. Expressed by the venom gland.

The protein resides in the secreted. It catalyses the reaction a 1,2-diacyl-sn-glycero-3-phosphocholine + H2O = a 1-acyl-sn-glycero-3-phosphocholine + a fatty acid + H(+). Functionally, snake venom phospholipase A2 (PLA2) that inhibits neuromuscular transmission by blocking acetylcholine release from the nerve termini. PLA2 catalyzes the calcium-dependent hydrolysis of the 2-acyl groups in 3-sn-phosphoglycerides. The sequence is that of Basic phospholipase A2 from Gloydius blomhoffii (Mamushi).